The chain runs to 1826 residues: 1,3-beta-glucan synthase component bgs3 (1826 aa).

The segment covering 34 to 43 has biased composition (polar residues); it reads QSNDQYNNIQ. The interval 34-90 is disordered; that stretch reads QSNDQYNNIQHPAPSFANPFIHEQDDSYSDILEEEPDEDAYDSPERPSSTEEFISQD. A compositionally biased stretch (acidic residues) spans 59-75; that stretch reads DSYSDILEEEPDEDAYD. 7 helical membrane-spanning segments follow: residues 427 to 447, 465 to 485, 504 to 524, 543 to 563, 597 to 617, 637 to 657, and 660 to 680; these read IWILHISVFWYFTVYNSPTIY, WCAPALAGAVASFISFLALIL, LIFVSILIALNIVPAAFIFGF, FFFSIGCVAYQSFIPLPFLLG, AALWITVFIAKFVESYYFLTL, FMIGASLCSHQPKFLLSLVYL, and LVLFFLDTYLWYMLISTMFSI. Residue Ser885 is modified to Phosphoserine. Helical transmembrane passes span 1272–1292, 1329–1349, 1375–1397, 1417–1437, 1438–1458, 1531–1551, 1571–1591, 1607–1627, 1642–1662, 1701–1721, and 1770–1790; these read VFIMISMQLLMLVFVNLGAMY, IISIFIVFFISFLPLVVHDLL, VTQNYANSIFTNLTYGGARYIAT, GSSIYLGSRLIMMLLFGTMTV, WTTHYVYFWVTMFALVICPFI, IFTEVFLPACFAFFTICAYTF, IWIMAALPIAISTAALLILLM, YGAVLAALAHAVSVFGLVFTF, VLGCIVIFAIHRLVFKLVVVF, CKVVEMNLFAMDFILSHCILF, and SLLFFALLCTFVAMIVVPLVL.

Belongs to the glycosyltransferase 48 family. As to quaternary structure, component of the 1,3-beta-glucan synthase (GS) complex, composed of at least the alternate catalytic subunits bgs1, bgs2, bgs3, and bgs4, and a regulatory subunit chr4.

The protein resides in the membrane. It catalyses the reaction [(1-&gt;3)-beta-D-glucosyl](n) + UDP-alpha-D-glucose = [(1-&gt;3)-beta-D-glucosyl](n+1) + UDP + H(+). Its function is as follows. Alternate catalytic subunit of the 1,3-beta-glucan synthase (GS) complex. Synthesizes 1,3-beta-glucan, a major structural component of the yeast cell wall. Required for cell wall biosynthesis and cell elongation. The protein is 1,3-beta-glucan synthase component bgs3 of Schizosaccharomyces pombe (strain 972 / ATCC 24843) (Fission yeast).